Reading from the N-terminus, the 258-residue chain is MGKKDKRWVLQRKNDHYYNLAKRRNYRSRATYKLFQLNEKFNLIKERNVVVDLGCAPGGWLQAARDIVGEDGFIVGIDLQTVKPLPHDNIIAIKGDMTKEEILKQAKDLLPEKPDVIICDASPNISGVWDVDHVRSLELTTMALMTATKMLKKGGNFVVKVFQGDLFEKYVQLVSEYFDKAFTTKPRASRDESAEVYVIGKRFNGKKFDMNSKSPIVKLLDTKPVEEEITSPSLRKEISKEDSGLMIKRIKEMRSKKE.

Glycine 58, tryptophan 60, aspartate 78, aspartate 96, and aspartate 120 together coordinate S-adenosyl-L-methionine. Lysine 160 (proton acceptor) is an active-site residue.

The protein belongs to the class I-like SAM-binding methyltransferase superfamily. RNA methyltransferase RlmE family.

It localises to the cytoplasm. The enzyme catalyses uridine(2552) in 23S rRNA + S-adenosyl-L-methionine = 2'-O-methyluridine(2552) in 23S rRNA + S-adenosyl-L-homocysteine + H(+). Functionally, specifically methylates the uridine in position 2552 of 23S rRNA at the 2'-O position of the ribose in the fully assembled 50S ribosomal subunit. This chain is Ribosomal RNA large subunit methyltransferase E, found in Methanococcus maripaludis (strain DSM 14266 / JCM 13030 / NBRC 101832 / S2 / LL).